Consider the following 156-residue polypeptide: Ribonuclease pancreatic (156 aa).

Positions 1–28 (MALEKSLVRLLLLVLILLVLGWVQPSLG) are cleaved as a signal peptide. Basic and acidic residues predominate over residues 33–43 (AKKFQRQHMDS). Residues 33 to 53 (AKKFQRQHMDSDSSPSSSSTY) form a disordered region. Residues K35 and R38 each coordinate substrate. Catalysis depends on H40, which acts as the Proton acceptor. Intrachain disulfides connect C54–C112, C68–C123, C86–C138, and C93–C100. Residue N62 is glycosylated (N-linked (GlcNAc...) asparagine; partial). Residues 69-73 (KPVNT) and K94 each bind substrate. N-linked (GlcNAc...) asparagine glycosylation occurs at N104. R113 contacts substrate. N-linked (GlcNAc...) asparagine glycosylation occurs at N116. H147 functions as the Proton donor in the catalytic mechanism.

Belongs to the pancreatic ribonuclease family. In terms of assembly, monomer. Interacts with and forms tight 1:1 complexes with RNH1. Dimerization of two such complexes may occur. Interaction with RNH1 inhibits this protein. N-linked glycans are of complex type. As to expression, pancreas and other tissues and body fluids (indicating it may have other physiological functions besides its role in digestion).

It localises to the secreted. It carries out the reaction an [RNA] containing cytidine + H2O = an [RNA]-3'-cytidine-3'-phosphate + a 5'-hydroxy-ribonucleotide-3'-[RNA].. The catalysed reaction is an [RNA] containing uridine + H2O = an [RNA]-3'-uridine-3'-phosphate + a 5'-hydroxy-ribonucleotide-3'-[RNA].. Its function is as follows. Endonuclease that catalyzes the cleavage of RNA on the 3' side of pyrimidine nucleotides. Acts on single-stranded and double-stranded RNA. This chain is Ribonuclease pancreatic (RNASE1), found in Homo sapiens (Human).